Reading from the N-terminus, the 276-residue chain is Large ribosomal subunit protein uL2 (276 aa).

Over residues 28–38 the composition is skewed to basic and acidic residues; the sequence is RPEKSLTEKLS. 2 disordered regions span residues 28-57 and 219-276; these read RPEK…QGGG and TVRG…RRKK.

Belongs to the universal ribosomal protein uL2 family. As to quaternary structure, part of the 50S ribosomal subunit. Forms a bridge to the 30S subunit in the 70S ribosome.

One of the primary rRNA binding proteins. Required for association of the 30S and 50S subunits to form the 70S ribosome, for tRNA binding and peptide bond formation. It has been suggested to have peptidyltransferase activity; this is somewhat controversial. Makes several contacts with the 16S rRNA in the 70S ribosome. This Exiguobacterium sp. (strain ATCC BAA-1283 / AT1b) protein is Large ribosomal subunit protein uL2.